Here is a 417-residue protein sequence, read N- to C-terminus: MKILVLGSGAREHAIITALLAERAGHDIVAAPGNAGIAADVAVEPGLDTLNGAAVTAFAIENGFELVVIGPEAPLVAGVADPLRRRGIPVFGPGRAAAQLEGSKTFAKRIMDEAGVPTGRAVRAATLAEAGSALDEFGAPYVVKADGLAAGKGVIVTEDRAAALAHAARYLTHGSVLVEEFLDGEEVSLFLVSDGHTVLPLSPAQDYKRLLDGDAGPNTGGMGAYSPLTWLPETFVDEVIDTVAMPTVRQLAAEQTPFIGLLYCGLIVTAKGIRVIEFNARFGDPETQVVLPRLVTPLSTLLFAAATGTLSGMPRPEFAPGTTVTVVLASEDYPESPRTGRPIAGLDEAASVPEVTIAHASTARDETTGALLATGGRVLSVVARGATFADARTRAYDALSRIRLDGSQYRTDIAARA.

The region spanning 108-307 (KRIMDEAGVP…LSTLLFAAAT (200 aa)) is the ATP-grasp domain. 134–188 (LDEFGAPYVVKADGLAAGKGVIVTEDRAAALAHAARYLTHGSVLVEEFLDGEEVS) lines the ATP pocket. Mg(2+) contacts are provided by Glu-277 and Asn-279.

This sequence belongs to the GARS family. Requires Mg(2+) as cofactor. It depends on Mn(2+) as a cofactor.

The catalysed reaction is 5-phospho-beta-D-ribosylamine + glycine + ATP = N(1)-(5-phospho-beta-D-ribosyl)glycinamide + ADP + phosphate + H(+). Its pathway is purine metabolism; IMP biosynthesis via de novo pathway; N(1)-(5-phospho-D-ribosyl)glycinamide from 5-phospho-alpha-D-ribose 1-diphosphate: step 2/2. This chain is Phosphoribosylamine--glycine ligase, found in Leifsonia xyli subsp. xyli (strain CTCB07).